We begin with the raw amino-acid sequence, 510 residues long: Cytochrome P450 90D2 (510 aa).

The chain crosses the membrane as a helical span at residues 6 to 26 (MVGSGGVYSWPAALLVAAIVV). A heme-binding site is contributed by Cys-444.

It belongs to the cytochrome P450 family. It depends on heme as a cofactor.

The protein resides in the membrane. The enzyme catalyses 3-epi-6-deoxocathasterone + reduced [NADPH--hemoprotein reductase] + O2 = 6-deoxotyphasterol + oxidized [NADPH--hemoprotein reductase] + H2O + H(+). The catalysed reaction is (22S,24R)-22-hydroxy-5alpha-ergostan-3-one + reduced [NADPH--hemoprotein reductase] + O2 = 3-dehydro-6-deoxoteasterone + oxidized [NADPH--hemoprotein reductase] + H2O + H(+). It carries out the reaction 6-deoxycathasterone + reduced [NADPH--hemoprotein reductase] + O2 = 6-deoxoteasterone + oxidized [NADPH--hemoprotein reductase] + H2O + H(+). The protein operates within plant hormone biosynthesis; brassinosteroid biosynthesis. Its function is as follows. Involved in reduction steps of the biosynthesis of plant campesterol-derivative steroids, ending to castasterone (CS) but missing brassinolide (BL). Catalyzes the conversion of (22S,24R)-22-hydroxy-5alpha-ergostan-3-one (22-hydroxy-campesta-3-one, 22-OH-3-one) to 3-dehydro-6-deoxoteasterone (6-deoxo3DT, 6-deoxo-3-DHT), 3-epi-6-deoxocathasterone (3-epi-6-deoxoCT) to 6-deoxotyphasterol (6-deoxoTY) and of 6-deoxocathasterone (6-deoxoCT) to 6-deoxoteasterone (6-deoxoTE). This is Cytochrome P450 90D2 from Brachypodium distachyon (Purple false brome).